Here is a 449-residue protein sequence, read N- to C-terminus: Glutamyl-tRNA reductase (449 aa).

Substrate contacts are provided by residues 58 to 61, Ser-121, 126 to 128, and Gln-132; these read TCNR and ETQ. Cys-59 functions as the Nucleophile in the catalytic mechanism. Position 203–208 (203–208) interacts with NADP(+); the sequence is GLGEMA.

It belongs to the glutamyl-tRNA reductase family. In terms of assembly, homodimer.

The enzyme catalyses (S)-4-amino-5-oxopentanoate + tRNA(Glu) + NADP(+) = L-glutamyl-tRNA(Glu) + NADPH + H(+). It participates in porphyrin-containing compound metabolism; protoporphyrin-IX biosynthesis; 5-aminolevulinate from L-glutamyl-tRNA(Glu): step 1/2. Catalyzes the NADPH-dependent reduction of glutamyl-tRNA(Glu) to glutamate 1-semialdehyde (GSA). The chain is Glutamyl-tRNA reductase from Helicobacter pylori (strain P12).